A 451-amino-acid chain; its full sequence is Ammonium transporter Rh type B (451 aa).

Over 1-11 (MADVSTSMRLK) the chain is Cytoplasmic. Residues 12-32 (LPVVCFILEIILIILFGALVQ) traverse the membrane as a helical segment. The Extracellular segment spans residues 33-63 (YDYETDAKEWHNQSHNDYENDFYFRYPSFQD). Asparagine 44 carries N-linked (GlcNAc...) asparagine glycosylation. Residues 64 to 84 (VHVMIFIGFGFLMTFLQKYGF) traverse the membrane as a helical segment. Topologically, residues 85 to 87 (GSV) are cytoplasmic. The helical transmembrane segment at 88 to 108 (GFNFLIAAFSLQWATLMQGFF) threads the bilayer. Residues 109–121 (HGMHGGKIHVGVE) are Extracellular-facing. The helical transmembrane segment at 122–142 (SMINADFCTGSVLISFGAVLG) threads the bilayer. At 143–151 (KTSPIQLLT) the chain is on the cytoplasmic side. Residues 152–172 (MAMFEVTLFAVNEFILLSLLG) form a helical membrane-spanning segment. Residues 173–176 (TRDA) are Extracellular-facing. Residues 177–197 (GGSMTIHTFGAYFGLMVTRIL) form a helical membrane-spanning segment. The Cytoplasmic segment spans residues 198–216 (YRPHLDKSKHRNSSVYHSD). Residues 217–237 (LFAMIGTIYLWMFWPSFNSAI) form a helical membrane-spanning segment. The Extracellular portion of the chain corresponds to 238-247 (TAHGDDQHRT). A helical membrane pass occupies residues 248 to 270 (ALNTYYSLAACTLATYGMSAVTS). Over 271–274 (HDGK) the chain is Cytoplasmic. A helical transmembrane segment spans residues 275-295 (LDMVHIQNAALAGGVAVGTAG). Residues 296–298 (EMM) lie on the Extracellular side of the membrane. Residues 299–319 (LTPFGSMIVGFLAGIISVLGF) form a helical membrane-spanning segment. Over 320–340 (KFLSPILESKLKIQDTCGVHN) the chain is Cytoplasmic. A helical membrane pass occupies residues 341-361 (LHGMPGVLGAIVGAVTAALAT). Residues 362–390 (MDVYGKGMEDVFPAVADGSIDASKQGGVQ) are Extracellular-facing. The helical transmembrane segment at 391–411 (ALSLAITLGIALLGGLIVVFG) threads the bilayer. Over 412 to 451 (TPPDTLCFEDGVYWEVPESEAPHEAQLTTVRTEETEKLSS) the chain is Cytoplasmic.

Belongs to the ammonium transporter (TC 2.A.49) family. Rh subfamily.

It is found in the basolateral cell membrane. Its subcellular location is the cytoplasmic vesicle membrane. In terms of biological role, functions as an ammonia transporter. May play a role in the elimination of ammonia in the gill. This Tetraodon nigroviridis (Spotted green pufferfish) protein is Ammonium transporter Rh type B (rhbg).